A 366-amino-acid polypeptide reads, in one-letter code: Glutamate 5-kinase (366 aa).

Lys17 lines the ATP pocket. Positions 57, 144, and 156 each coordinate substrate. Residues 176–177 (SD) and 216–222 (TGGMASK) contribute to the ATP site. A PUA domain is found at 278–352 (RGALVLDDGA…GRSTTELPDT (75 aa)).

Belongs to the glutamate 5-kinase family.

Its subcellular location is the cytoplasm. It carries out the reaction L-glutamate + ATP = L-glutamyl 5-phosphate + ADP. It functions in the pathway amino-acid biosynthesis; L-proline biosynthesis; L-glutamate 5-semialdehyde from L-glutamate: step 1/2. Functionally, catalyzes the transfer of a phosphate group to glutamate to form L-glutamate 5-phosphate. In Nocardia farcinica (strain IFM 10152), this protein is Glutamate 5-kinase.